A 159-amino-acid chain; its full sequence is Abscisic acid and environmental stress-inducible protein (159 aa).

6 tandem repeats follow at residues 38–49 (GGGYNHGGGGYN), 50–61 (GGGYNHGGGGYN), 63–74 (GGGYNHGGGGYN), 77–88 (GGGYNHGGGGYN), 91–102 (GGGYNHGGGGYN), and 105–116 (GGGYNHGGGGYN). A 7 X 12 AA repeats of G-G-G-Y-N-H-G-G-G-Y-N region spans residues 38–135 (GGGYNHGGGG…GYNHGGGGCQ (98 aa)). The stretch at 124–135 (GGGYNHGGGGCQ) is one 7; approximate repeat.

Belongs to the GRP family.

This chain is Abscisic acid and environmental stress-inducible protein, found in Medicago sativa subsp. falcata (Sickle medic).